The sequence spans 343 residues: MLTDRQLLILQAIVDDYIRSAEPVGSRSISKREDITFSPATIRNEMADLEELGFLEKPHSSAGRIPSQKGYRYYVDHLLMPHRLTKKERHYIHELFTKRIQEVEQAIQQSAQILSSMTRYISVVLGPEMFETKLKSIHMIPLTAHSVVVIFVTDTGYVENQTMHLPHSVNPVDLEKTVNILNERLAGVSLFQLREKLNKEVADVLRFHVTNYELVLDLLEKTFEAEKSEKVFYGGKTNLLSQPEFRDVEKIKQILTILEQDDVMHQMIRSSGEQIQVRIGHENNVEAFEDLSVITASYSIGGKHMGTIGIVGPTRMEYRRTISVVEHLSKDLTKLLTDLYQQS.

Belongs to the HrcA family.

In terms of biological role, negative regulator of class I heat shock genes (grpE-dnaK-dnaJ and groELS operons). Prevents heat-shock induction of these operons. The chain is Heat-inducible transcription repressor HrcA from Halalkalibacterium halodurans (strain ATCC BAA-125 / DSM 18197 / FERM 7344 / JCM 9153 / C-125) (Bacillus halodurans).